The sequence spans 271 residues: MGLWYRMLENQDLEEVITVRVQDPRVQNEGSWNSYVDYKIFLHTNSKAFTAKTSCVRRRYREFVWLRKQLQRNAGLVPVPELPGKSTFFGGSDEFIEKRRQGLQHFLEKVLQSVVLLSDSQLHLFLQSQLSVPEIEACVQGRGAMTVSDAILSYAMSNCGWAQEERQSTSHLAKGDQLNSCCFLPRSGRRSSPSPPLSEEKEQLETWAPVMDSEGPSSESPTLLPSSSLPACWDPARPEEGLSVSQPARRAVAADQAGPMEPTQLDTAWDK.

Positions 16–132 (VITVRVQDPR…HLFLQSQLSV (117 aa)) constitute a PX domain. Positions 59, 85, and 99 each coordinate a 1,2-diacyl-sn-glycero-3-phospho-(1D-myo-inositol-3-phosphate). The segment at 135 to 139 (IEACV) is important for membrane trafficking. The interval 185–271 (PRSGRRSSPS…PTQLDTAWDK (87 aa)) is disordered. Residues 213-230 (SEGPSSESPTLLPSSSLP) show a composition bias toward low complexity.

The protein belongs to the sorting nexin family. In terms of assembly, monomer. Interacts with TRPV3; this interaction promotes TRPV3 trafficking from the cell membrane to lysosome for degradation.

The protein localises to the cell membrane. The protein resides in the endosome. It is found in the cytoplasm. Functionally, phosphoinositide-binding protein involved in protein sorting and membrane trafficking in endosomes. Regulates the levels of TRPV3 by promoting its trafficking from the cell membrane to lysosome for degradation. The sequence is that of Sorting nexin-11 (Snx11) from Mus musculus (Mouse).